The following is a 182-amino-acid chain: Putative manganese efflux pump MntP (182 aa).

6 consecutive transmembrane segments (helical) span residues 6 to 26 (LIPL…VSLG), 37 to 57 (ILYI…IGMV), 71 to 91 (HFAG…STIL), 101 to 121 (IGIS…SVGL), 131 to 151 (IITI…GLLI), and 162 to 182 (YGEI…LFPI).

It belongs to the MntP (TC 9.B.29) family.

Its subcellular location is the cell membrane. Probably functions as a manganese efflux pump. In Bacillus cereus (strain B4264), this protein is Putative manganese efflux pump MntP.